We begin with the raw amino-acid sequence, 313 residues long: Ribosomal RNA small subunit methyltransferase H (313 aa).

S-adenosyl-L-methionine-binding positions include 35–37 (GGH), Asp-55, Phe-79, Asp-101, and Gln-108.

It belongs to the methyltransferase superfamily. RsmH family.

The protein localises to the cytoplasm. It catalyses the reaction cytidine(1402) in 16S rRNA + S-adenosyl-L-methionine = N(4)-methylcytidine(1402) in 16S rRNA + S-adenosyl-L-homocysteine + H(+). Specifically methylates the N4 position of cytidine in position 1402 (C1402) of 16S rRNA. In Salmonella paratyphi A (strain ATCC 9150 / SARB42), this protein is Ribosomal RNA small subunit methyltransferase H.